A 215-amino-acid chain; its full sequence is Cytochrome b6 (215 aa).

Residues 32–52 (IFYCLGGITLTCFLVQVATGF) traverse the membrane as a helical segment. Cys-35 is a heme c binding site. Positions 86 and 100 each coordinate heme b. Transmembrane regions (helical) follow at residues 90 to 110 (ASMM…TGGF), 116 to 136 (LTWV…VTGY), and 186 to 206 (LHTF…FPMI). Heme b is bound by residues His-187 and His-202.

Belongs to the cytochrome b family. PetB subfamily. As to quaternary structure, the 4 large subunits of the cytochrome b6-f complex are cytochrome b6, subunit IV (17 kDa polypeptide, PetD), cytochrome f and the Rieske protein, while the 4 small subunits are PetG, PetL, PetM and PetN. The complex functions as a dimer. Heme b is required as a cofactor. Heme c serves as cofactor.

The protein localises to the plastid. It is found in the chloroplast thylakoid membrane. In terms of biological role, component of the cytochrome b6-f complex, which mediates electron transfer between photosystem II (PSII) and photosystem I (PSI), cyclic electron flow around PSI, and state transitions. This chain is Cytochrome b6, found in Phalaenopsis aphrodite subsp. formosana (Moth orchid).